Here is a 559-residue protein sequence, read N- to C-terminus: DNA ligase (559 aa).

Position 247 (Glu247) interacts with ATP. Residue Lys249 is the N6-AMP-lysine intermediate of the active site. ATP-binding residues include Arg254, Arg269, Glu299, Phe339, Arg414, and Lys420.

Belongs to the ATP-dependent DNA ligase family. Mg(2+) is required as a cofactor.

It catalyses the reaction ATP + (deoxyribonucleotide)n-3'-hydroxyl + 5'-phospho-(deoxyribonucleotide)m = (deoxyribonucleotide)n+m + AMP + diphosphate.. The catalysed reaction is NAD(+) + (deoxyribonucleotide)n-3'-hydroxyl + 5'-phospho-(deoxyribonucleotide)m = (deoxyribonucleotide)n+m + AMP + beta-nicotinamide D-nucleotide.. Functionally, DNA ligase that seals nicks in double-stranded DNA during DNA replication, DNA recombination and DNA repair. Shows high activity with either ATP or NAD(+). In Thermococcus fumicolans, this protein is DNA ligase.